A 438-amino-acid polypeptide reads, in one-letter code: Flagellum-specific ATP synthase (438 aa).

Residues 119–139 (GLSPVSTEQSPPNPMKRPPIR) are disordered. 165–172 (AGSGVGKS) serves as a coordination point for ATP.

It belongs to the ATPase alpha/beta chains family.

It is found in the cytoplasm. The enzyme catalyses ATP + H2O + 4 H(+)(in) = ADP + phosphate + 5 H(+)(out). Functionally, probable catalytic subunit of a protein translocase for flagellum-specific export, or a proton translocase involved in local circuits at the flagellum. The polypeptide is Flagellum-specific ATP synthase (fliI) (Bacillus subtilis (strain 168)).